The following is a 729-amino-acid chain: Fatty acid oxidation complex subunit alpha (729 aa).

Residues 1–189 (MLYKGDTLYL…KIGLVDGVVK (189 aa)) are enoyl-CoA hydratase/isomerase. Position 296 (D296) interacts with substrate. Residues 311 to 729 (ETPKQAAVLG…ARPVGSLKTA (419 aa)) are 3-hydroxyacyl-CoA dehydrogenase. Residues M324, D343, 400 to 402 (VVE), K407, and S429 contribute to the NAD(+) site. H450 serves as the catalytic For 3-hydroxyacyl-CoA dehydrogenase activity. Residue N453 participates in NAD(+) binding. 2 residues coordinate substrate: N500 and Y660. The disordered stretch occupies residues 708-729 (RHNEPYYPPVEPARPVGSLKTA).

In the N-terminal section; belongs to the enoyl-CoA hydratase/isomerase family. It in the C-terminal section; belongs to the 3-hydroxyacyl-CoA dehydrogenase family. In terms of assembly, heterotetramer of two alpha chains (FadB) and two beta chains (FadA).

The catalysed reaction is a (3S)-3-hydroxyacyl-CoA + NAD(+) = a 3-oxoacyl-CoA + NADH + H(+). It carries out the reaction a (3S)-3-hydroxyacyl-CoA = a (2E)-enoyl-CoA + H2O. It catalyses the reaction a 4-saturated-(3S)-3-hydroxyacyl-CoA = a (3E)-enoyl-CoA + H2O. The enzyme catalyses (3S)-3-hydroxybutanoyl-CoA = (3R)-3-hydroxybutanoyl-CoA. The catalysed reaction is a (3Z)-enoyl-CoA = a 4-saturated (2E)-enoyl-CoA. It carries out the reaction a (3E)-enoyl-CoA = a 4-saturated (2E)-enoyl-CoA. The protein operates within lipid metabolism; fatty acid beta-oxidation. In terms of biological role, involved in the aerobic and anaerobic degradation of long-chain fatty acids via beta-oxidation cycle. Catalyzes the formation of 3-oxoacyl-CoA from enoyl-CoA via L-3-hydroxyacyl-CoA. It can also use D-3-hydroxyacyl-CoA and cis-3-enoyl-CoA as substrate. The sequence is that of Fatty acid oxidation complex subunit alpha from Salmonella schwarzengrund (strain CVM19633).